A 293-amino-acid chain; its full sequence is Ribosomal protein L11 methyltransferase (293 aa).

4 residues coordinate S-adenosyl-L-methionine: threonine 145, glycine 166, aspartate 188, and asparagine 230.

It belongs to the methyltransferase superfamily. PrmA family.

It is found in the cytoplasm. It catalyses the reaction L-lysyl-[protein] + 3 S-adenosyl-L-methionine = N(6),N(6),N(6)-trimethyl-L-lysyl-[protein] + 3 S-adenosyl-L-homocysteine + 3 H(+). In terms of biological role, methylates ribosomal protein L11. The chain is Ribosomal protein L11 methyltransferase from Shewanella pealeana (strain ATCC 700345 / ANG-SQ1).